The primary structure comprises 207 residues: N-(5'-phosphoribosyl)anthranilate isomerase (207 aa).

Belongs to the TrpF family.

It catalyses the reaction N-(5-phospho-beta-D-ribosyl)anthranilate = 1-(2-carboxyphenylamino)-1-deoxy-D-ribulose 5-phosphate. The protein operates within amino-acid biosynthesis; L-tryptophan biosynthesis; L-tryptophan from chorismate: step 3/5. This is N-(5'-phosphoribosyl)anthranilate isomerase from Legionella pneumophila subsp. pneumophila (strain Philadelphia 1 / ATCC 33152 / DSM 7513).